The following is a 308-amino-acid chain: D-alanine--D-alanine ligase (308 aa).

The region spanning K103–E302 is the ATP-grasp domain. M130 to T184 provides a ligand contact to ATP. Mg(2+) contacts are provided by D252, E269, and N271.

This sequence belongs to the D-alanine--D-alanine ligase family. Mg(2+) serves as cofactor. The cofactor is Mn(2+).

It is found in the cytoplasm. The catalysed reaction is 2 D-alanine + ATP = D-alanyl-D-alanine + ADP + phosphate + H(+). The protein operates within cell wall biogenesis; peptidoglycan biosynthesis. Functionally, cell wall formation. The polypeptide is D-alanine--D-alanine ligase (Afipia carboxidovorans (strain ATCC 49405 / DSM 1227 / KCTC 32145 / OM5) (Oligotropha carboxidovorans)).